A 90-amino-acid chain; its full sequence is uncharacterized protein (90 aa).

This is an uncharacterized protein from Rickettsia prowazekii (strain Madrid E).